Here is a 101-residue protein sequence, read N- to C-terminus: Ubiquitin-related modifier 1 homolog (101 aa).

A 1-thioglycine modification is found at Gly-101. A Glycyl lysine isopeptide (Gly-Lys) (interchain with K-? in acceptor proteins) cross-link involves residue Gly-101.

Belongs to the URM1 family. As to quaternary structure, interacts with cer. In terms of processing, C-terminal thiocarboxylation occurs in 2 steps, it is first acyl-adenylated (-COAMP) via the hesA/moeB/thiF part of the MOCS3 homolog, then thiocarboxylated (-COSH) via the rhodanese domain of the MOCS3 homolog.

Its subcellular location is the cytoplasm. Its pathway is tRNA modification; 5-methoxycarbonylmethyl-2-thiouridine-tRNA biosynthesis. Acts as a sulfur carrier required for 2-thiolation of mcm(5)S(2)U at tRNA wobble positions of cytosolic tRNA(Lys), tRNA(Glu) and tRNA(Gln). Serves as sulfur donor in tRNA 2-thiolation reaction by being thiocarboxylated (-COSH) at its C-terminus by MOCS3. The sulfur is then transferred to tRNA to form 2-thiolation of mcm(5)S(2)U. Also acts as a ubiquitin-like protein (UBL) that is covalently conjugated via an isopeptide bond to lysine residues of target proteins such as Prx2/Jafrac1, Ciao1, Eip71CD and GILT1. The thiocarboxylated form serves as substrate for conjugation and oxidative stress specifically induces the formation of UBL-protein conjugates. The sequence is that of Ubiquitin-related modifier 1 homolog from Drosophila erecta (Fruit fly).